The primary structure comprises 142 residues: Ribosome maturation factor RimP (142 aa).

This sequence belongs to the RimP family.

It localises to the cytoplasm. Required for maturation of 30S ribosomal subunits. The polypeptide is Ribosome maturation factor RimP (Nitrosospira multiformis (strain ATCC 25196 / NCIMB 11849 / C 71)).